The primary structure comprises 125 residues: Homeobox protein HD-8 (125 aa).

The segment at residues 30 to 89 (EPDTRTRKTTFQMMVLKEVFKIAPHPSTLTKADLALMIKLPLKAVQIWFQNERSRKERGG) is a DNA-binding region (homeobox).

It is found in the nucleus. This chain is Homeobox protein HD-8 (HD-8), found in Encephalitozoon cuniculi (strain GB-M1) (Microsporidian parasite).